Here is a 750-residue protein sequence, read N- to C-terminus: ABC transporter D family member 3 (750 aa).

Polar residues predominate over residues 1–14 (MKKNNVNNITETLN). The segment at 1–32 (MKKNNVNNITETLNSSSSSSSSSGSSSDEEVK) is disordered. The span at 15–26 (SSSSSSSSSGSS) shows a compositional bias: low complexity. 4 helical membrane-spanning segments follow: residues 63–83 (IVIILYEKPVIPLLLFLLLFG), 123–143 (FAIGGSALFDAIIKFIVSIMA), 188–208 (FTTLLSSIVSQCITGPMVVVY), and 215–235 (TTIDWYAPLIVYGYFFLGYFI). Positions 74-362 (PLLLFLLLFG…EQAKQQFEAL (289 aa)) constitute an ABC transmembrane type-1 domain. A coiled-coil region spans residues 334 to 370 (ALLKRSNKNIKNEELLVEEEQAKQQFEALLKNKKRVI). A helical transmembrane segment spans residues 382-402 (MFTFFSPLINYFIISIPVFFL). Positions 507–737 (ITLDDVTYFT…SNNINTINID (231 aa)) constitute an ABC transporter domain. Residue 540–547 (GPSGSGKS) coordinates ATP.

The protein belongs to the ABC transporter superfamily. ABCD family. Peroxisomal fatty acyl CoA transporter (TC 3.A.1.203) subfamily.

The protein localises to the membrane. This Dictyostelium discoideum (Social amoeba) protein is ABC transporter D family member 3 (abcD3).